Consider the following 253-residue polypeptide: Adenosylcobinamide-GDP ribazoletransferase (253 aa).

7 helical membrane passes run 33-53 (ISPL…YVLL), 56-76 (ILEA…RGFN), 106-126 (IGSG…VALL), 132-152 (FYTI…GLYI), 178-198 (VLLF…FLVF), 209-229 (LGGS…PLFL), and 233-253 (EITN…LYLH).

This sequence belongs to the CobS family. Mg(2+) is required as a cofactor.

The protein localises to the cell membrane. It carries out the reaction alpha-ribazole + adenosylcob(III)inamide-GDP = adenosylcob(III)alamin + GMP + H(+). The enzyme catalyses alpha-ribazole 5'-phosphate + adenosylcob(III)inamide-GDP = adenosylcob(III)alamin 5'-phosphate + GMP + H(+). It functions in the pathway cofactor biosynthesis; adenosylcobalamin biosynthesis; adenosylcobalamin from cob(II)yrinate a,c-diamide: step 7/7. Joins adenosylcobinamide-GDP and alpha-ribazole to generate adenosylcobalamin (Ado-cobalamin). Also synthesizes adenosylcobalamin 5'-phosphate from adenosylcobinamide-GDP and alpha-ribazole 5'-phosphate. The sequence is that of Adenosylcobinamide-GDP ribazoletransferase from Saccharolobus islandicus (strain M.16.27) (Sulfolobus islandicus).